The chain runs to 461 residues: Bifunctional protein GlmU (461 aa).

The segment at 1–229 is pyrophosphorylase; sequence MEKYVVVLAA…FSESLGVNDR (229 aa). UDP-N-acetyl-alpha-D-glucosamine-binding positions include 8–11, K22, Q72, and 77–78; these read LAAG and GT. D102 provides a ligand contact to Mg(2+). UDP-N-acetyl-alpha-D-glucosamine contacts are provided by G139, E154, N169, and N227. N227 is a binding site for Mg(2+). The tract at residues 230-250 is linker; that stretch reads IALAEATRIMQRRINEGHMRD. Positions 251 to 461 are N-acetyltransferase; it reads GVTFIDPATA…LPLSEDEEWK (211 aa). UDP-N-acetyl-alpha-D-glucosamine is bound by residues R332 and K350. H362 serves as the catalytic Proton acceptor. Y365 and N376 together coordinate UDP-N-acetyl-alpha-D-glucosamine. Acetyl-CoA-binding residues include A422 and R439.

This sequence in the N-terminal section; belongs to the N-acetylglucosamine-1-phosphate uridyltransferase family. It in the C-terminal section; belongs to the transferase hexapeptide repeat family. In terms of assembly, homotrimer. Requires Mg(2+) as cofactor.

The protein resides in the cytoplasm. It catalyses the reaction alpha-D-glucosamine 1-phosphate + acetyl-CoA = N-acetyl-alpha-D-glucosamine 1-phosphate + CoA + H(+). The catalysed reaction is N-acetyl-alpha-D-glucosamine 1-phosphate + UTP + H(+) = UDP-N-acetyl-alpha-D-glucosamine + diphosphate. Its pathway is nucleotide-sugar biosynthesis; UDP-N-acetyl-alpha-D-glucosamine biosynthesis; N-acetyl-alpha-D-glucosamine 1-phosphate from alpha-D-glucosamine 6-phosphate (route II): step 2/2. The protein operates within nucleotide-sugar biosynthesis; UDP-N-acetyl-alpha-D-glucosamine biosynthesis; UDP-N-acetyl-alpha-D-glucosamine from N-acetyl-alpha-D-glucosamine 1-phosphate: step 1/1. It participates in bacterial outer membrane biogenesis; LPS lipid A biosynthesis. Its function is as follows. Catalyzes the last two sequential reactions in the de novo biosynthetic pathway for UDP-N-acetylglucosamine (UDP-GlcNAc). The C-terminal domain catalyzes the transfer of acetyl group from acetyl coenzyme A to glucosamine-1-phosphate (GlcN-1-P) to produce N-acetylglucosamine-1-phosphate (GlcNAc-1-P), which is converted into UDP-GlcNAc by the transfer of uridine 5-monophosphate (from uridine 5-triphosphate), a reaction catalyzed by the N-terminal domain. The chain is Bifunctional protein GlmU from Lactobacillus delbrueckii subsp. bulgaricus (strain ATCC 11842 / DSM 20081 / BCRC 10696 / JCM 1002 / NBRC 13953 / NCIMB 11778 / NCTC 12712 / WDCM 00102 / Lb 14).